The primary structure comprises 935 residues: Progesterone receptor (935 aa).

The disordered stretch occupies residues 1–49; sequence MTELKAKGLRAPHVAGSPSSPKVGSPLPCRQATGQFPGSQTSDTLPEVS. The interval 1 to 164 is AF3; mediates transcriptional activation; it reads MTELKAKGLR…PATQRVLSPL (164 aa). The modulating, Pro-Rich stretch occupies residues 1–568; the sequence is MTELKAKGLR…YSFESLPQKI (568 aa). At Ser20 the chain carries Phosphoserine. Residues 32–44 show a composition bias toward polar residues; the sequence is ATGQFPGSQTSDT. An LXXL motif 1 motif is present at residues 55-59; that stretch reads LDGLL. The disordered stretch occupies residues 62–158; the sequence is RICQAQDPPD…EDPPAAPATQ (97 aa). Residue Ser81 is modified to Phosphoserine. An LXXL motif 2 motif is present at residues 115–119; that stretch reads LDTLW. A phosphoserine mark is found at Ser130 and Ser162. The mediates transcriptional transrepression stretch occupies residues 165-305; sequence MSRSGGKAGD…LATTVTDFIH (141 aa). A Nuclear localization signal motif is present at residues 183 to 187; it reads KVLPR. A disordered region spans residues 187 to 233; the sequence is RGLSPSRQLLLPTSGSPHWSGAPVKPSPQPAAVEVEEEDGSESEDSA. Phosphoserine is present on Ser190. A compositionally biased stretch (polar residues) spans 191–203; sequence PSRQLLLPTSGSP. Position 213 is a phosphoserine (Ser213). The segment covering 220 to 231 has biased composition (acidic residues); sequence EVEEEDGSESED. Position 294 is a phosphoserine; by MAPK1 (Ser294). The interval 328 to 365 is disordered; the sequence is SYDGGSGAASAFAPPRSSPSASSTPVPGSDFPDCAYAP. Positions 335–356 are enriched in low complexity; sequence AASAFAPPRSSPSASSTPVPGS. Ser345 bears the Phosphoserine; by MAPK mark. A Glycyl lysine isopeptide (Lys-Gly) (interchain with G-Cter in SUMO); alternate cross-link involves residue Lys388. Lys388 participates in a covalent cross-link: Glycyl lysine isopeptide (Lys-Gly) (interchain with G-Cter in ubiquitin); alternate. Positions 390–452 are disordered; it reads EEEGAEASTR…PASASVSSAS (63 aa). Ser400 carries the phosphoserine; by CDK2 modification. Over residues 418–433 the composition is skewed to pro residues; the sequence is PLGPPPPLPPRAPPSR. Positions 434 to 452 are enriched in low complexity; that stretch reads PGEAAVTAAPASASVSSAS. The AF1; mediates transcriptional activation stretch occupies residues 456–548; sequence STLECILYKA…VYPPYLNYLR (93 aa). A Glycyl lysine isopeptide (Lys-Gly) (interchain with G-Cter in SUMO) cross-link involves residue Lys533. 2 consecutive NR C4-type zinc fingers follow at residues 569 to 589 and 605 to 629; these read CLIC…CGSC and CAGR…LRKC. The nuclear receptor DNA-binding region spans 569–641; sequence CLICGDEASG…AGMVLGGRKF (73 aa). Phosphoserine is present on Ser678. The region spanning 681–915 is the NR LBD domain; the sequence is QDIQLIPPLI…EFPEMMSEVI (235 aa). An AF2; mediates transcriptional activation region spans residues 689-935; the sequence is LINLLLSIEP…MVKPLLFHKK (247 aa). Position 768 (Arg768) interacts with progesterone.

It belongs to the nuclear hormone receptor family. In terms of assembly, interacts with SMARD1 and UNC45A. Interacts with CUEDC2; the interaction promotes ubiquitination, decreases sumoylation, and represses transcriptional activity. Interacts with PIAS3; the interaction promotes sumoylation of PR in a hormone-dependent manner, inhibits DNA-binding, and alters nuclear export. Interacts with SP1; the interaction requires ligand-induced phosphorylation on Ser-345 by ERK1/2-MAPK. Interacts with PRMT2. Interacts with NCOA2 and NCOA1. Interacts with KLF9. Interacts with GTF2B. In terms of processing, phosphorylated on multiple serine sites. Several of these sites are hormone-dependent. Phosphorylation on Ser-294 is highly hormone-dependent and modulates ubiquitination and sumoylation on Lys-388. Phosphorylation on Ser-345 also requires induction by hormone. Basal phosphorylation on Ser-81, Ser-162, Ser-190 and Ser-400 is increased in response to progesterone and can be phosphorylated in vitro by the CDK2-A1 complex. Increased levels of phosphorylation on Ser-400 also in the presence of EGF, heregulin, IGF, PMA and FBS. Phosphorylation at this site by CDK2 is ligand-independent, and increases nuclear translocation and transcriptional activity. Phosphorylation at Ser-162 and Ser-294, but not at Ser-190, is impaired during the G(2)/M phase of the cell cycle. Phosphorylation on Ser-345 by ERK1/2 MAPK is required for interaction with SP1. Post-translationally, sumoylation is hormone-dependent and represses transcriptional activity. Sumoylation on all three sites is enhanced by PIAS3. Desumoylated by SENP1. Sumoylation on Lys-388, the main site of sumoylation, is repressed by ubiquitination on the same site, and modulated by phosphorylation at Ser-294. Ubiquitination is hormone-dependent and represses sumoylation on the same site. Promoted by MAPK-mediated phosphorylation on Ser-294. Ubiquitinated by UBR5, leading to its degradation: UBR5 specifically recognizes and binds ligand-bound PGR when it is not associated with coactivators (NCOAs). In presence of NCOAs, the UBR5-degron is not accessible, preventing its ubiquitination and degradation. In terms of processing, palmitoylated by ZDHHC7 and ZDHHC21. Palmitoylation is required for plasma membrane targeting and for rapid intracellular signaling via ERK and AKT kinases and cAMP generation.

The protein localises to the nucleus. Its subcellular location is the cytoplasm. Its function is as follows. The steroid hormones and their receptors are involved in the regulation of eukaryotic gene expression and affect cellular proliferation and differentiation in target tissues. Transcriptional activator of several progesteron-dependent promoters in a variety of cell types. Involved in activation of SRC-dependent MAPK signaling on hormone stimulation. The sequence is that of Progesterone receptor (PGR) from Sapajus apella (Brown-capped capuchin).